Consider the following 75-residue polypeptide: Large ribosomal subunit protein bL31 (75 aa).

The protein belongs to the bacterial ribosomal protein bL31 family. Type A subfamily. In terms of assembly, part of the 50S ribosomal subunit.

Binds the 23S rRNA. This chain is Large ribosomal subunit protein bL31, found in Bradyrhizobium sp. (strain BTAi1 / ATCC BAA-1182).